A 251-amino-acid chain; its full sequence is RNA polymerase sigma factor SigI (251 aa).

The Polymerase core binding signature appears at D61–I74. The segment at residues V206–K225 is a DNA-binding region (H-T-H motif).

Belongs to the sigma-70 factor family. SigI subfamily. As to quaternary structure, interacts with RsgI.

Its subcellular location is the cytoplasm. Its activity is regulated as follows. Negatively regulated by the anti-sigma-I factor RsgI. Upon exposure to heat, SigI is released from RsgI and activated. Transient heat activation of SigI may depend upon DnaK chaperone. In terms of biological role, sigma factors are initiation factors that promote the attachment of RNA polymerase to specific initiation sites and are then released. This sigma factor is involved in regulation of cell wall metabolism in response to heat stress. Acts by regulating the expression of genes such as bcrC, mreBH and lytE. Also plays a role in survival at low temperatures. This chain is RNA polymerase sigma factor SigI, found in Bacillus subtilis (strain 168).